A 250-amino-acid polypeptide reads, in one-letter code: Probable replication-associated protein repA2 (250 aa).

This sequence belongs to the IncFII RepA family.

Functionally, this protein is essential for plasmid replication; it is involved in copy control functions. The sequence is that of Probable replication-associated protein repA2 (repA2) from Buchnera aphidicola subsp. Acyrthosiphon pisum (strain APS) (Acyrthosiphon pisum symbiotic bacterium).